Here is a 458-residue protein sequence, read N- to C-terminus: tRNA-2-methylthio-N(6)-dimethylallyladenosine synthase (458 aa).

One can recognise an MTTase N-terminal domain in the interval 15–134; that stretch reads KKVFIKTYGC…LPELLEKAKQ (120 aa). [4Fe-4S] cluster-binding residues include Cys24, Cys60, Cys97, Cys175, Cys179, and Cys182. The region spanning 161–395 is the Radical SAM core domain; that stretch reads RKRGVSAFLT…LLLEQQNTFL (235 aa). The region spanning 396 to 457 is the TRAM domain; it reads RSKIGQKTDV…SNSFVGEMTN (62 aa).

This sequence belongs to the methylthiotransferase family. MiaB subfamily. As to quaternary structure, monomer. It depends on [4Fe-4S] cluster as a cofactor.

Its subcellular location is the cytoplasm. The catalysed reaction is N(6)-dimethylallyladenosine(37) in tRNA + (sulfur carrier)-SH + AH2 + 2 S-adenosyl-L-methionine = 2-methylsulfanyl-N(6)-dimethylallyladenosine(37) in tRNA + (sulfur carrier)-H + 5'-deoxyadenosine + L-methionine + A + S-adenosyl-L-homocysteine + 2 H(+). Catalyzes the methylthiolation of N6-(dimethylallyl)adenosine (i(6)A), leading to the formation of 2-methylthio-N6-(dimethylallyl)adenosine (ms(2)i(6)A) at position 37 in tRNAs that read codons beginning with uridine. The protein is tRNA-2-methylthio-N(6)-dimethylallyladenosine synthase of Bartonella tribocorum (strain CIP 105476 / IBS 506).